The primary structure comprises 148 residues: Large ribosomal subunit protein bL9 (148 aa).

It belongs to the bacterial ribosomal protein bL9 family.

In terms of biological role, binds to the 23S rRNA. The chain is Large ribosomal subunit protein bL9 from Parabacteroides distasonis (strain ATCC 8503 / DSM 20701 / CIP 104284 / JCM 5825 / NCTC 11152).